Consider the following 343-residue polypeptide: Probable transposase for insertion sequence element (343 aa).

This sequence belongs to the transposase mutator family.

Required for the transposition of the insertion element. This is Probable transposase for insertion sequence element from Corynebacterium diphtheriae.